The sequence spans 414 residues: Succinylornithine transaminase (414 aa).

Position 260 is an N6-(pyridoxal phosphate)lysine (K260).

The protein belongs to the class-III pyridoxal-phosphate-dependent aminotransferase family. AstC subfamily. Pyridoxal 5'-phosphate is required as a cofactor.

It catalyses the reaction N(2)-succinyl-L-ornithine + 2-oxoglutarate = N-succinyl-L-glutamate 5-semialdehyde + L-glutamate. It participates in amino-acid degradation; L-arginine degradation via AST pathway; L-glutamate and succinate from L-arginine: step 3/5. In terms of biological role, catalyzes the transamination of N(2)-succinylornithine and alpha-ketoglutarate into N(2)-succinylglutamate semialdehyde and glutamate. Can also act as an acetylornithine aminotransferase. This is Succinylornithine transaminase from Yersinia pestis bv. Antiqua (strain Antiqua).